A 296-amino-acid polypeptide reads, in one-letter code: Circadian clock oscillator protein KaiA (296 aa).

Residues 2-133 (ARPGLTIALL…LRQGRADGRS (132 aa)) are psR domain, binds oxidized quinones. The KaiA N-terminal domain maps to 2–152 (ARPGLTIALL…KLSRRLQERL (151 aa)). The tract at residues 153–161 (GYLGVFYKR) is flexible linker. In terms of domain architecture, KaiA C-terminal spans 162-270 (DPSRFLGSLP…CEMYRRSIPP (109 aa)).

As to quaternary structure, homodimer. The KaiABC complex composition changes during the circadian cycle to control KaiC phosphorylation. Complexes KaiC(6), KaiA(2-4):KaiC(6), KaiB(6):KaiC(6) and KaiC(6):KaiB(6):KaiA(12) are among the most important forms, many form cooperatively. KaiA and CikA bind to the same region of the KaiB(fs) form and therefore compete.

In terms of biological role, key component of the KaiABC oscillator complex, which constitutes the main circadian regulator in cyanobacteria. Complex composition changes during the circadian cycle to control KaiC phosphorylation. KaiA stimulates KaiC autophosphorylation, while KaiB sequesters KaiA, leading to KaiC autodephosphorylation. KaiA binding to the KaiC CII domain during the subjective day yields KaiA(2-4):KaiC(6) complexes which stimulate KaiC autophosphorylation. Phospho-Ser-431 KaiC accumulation triggers binding of KaiB during the subjective night to form the KaiB(6):KaiC(6) complex, leading to changes in the output regulators CikA and SasA. KaiB(6):KaiC(6) formation exposes a site for KaiA binding on KaiB that sequesters KaiA from KaiC's CII domain, making the KaiC(6):KaiB(6):KaiA(12) complex resulting in KaiC autodephosphorylation. Complete dephosphorylation of KaiC leads to dissociation of KaiA(2):KaiB(1), completing 1 cycle of the Kai oscillator. Functionally, binds oxidized quinones via the N-terminal PsR domain, allowing it to sense redox changes and possibly mediate clock input. The chain is Circadian clock oscillator protein KaiA from Parasynechococcus marenigrum (strain WH8102).